The chain runs to 229 residues: Orotidine 5'-phosphate decarboxylase (229 aa).

Residues aspartate 9, lysine 31, 58–67 (DLKLFDIPNT), threonine 121, arginine 179, glutamine 188, glycine 208, and arginine 209 each bind substrate. Lysine 60 functions as the Proton donor in the catalytic mechanism.

This sequence belongs to the OMP decarboxylase family. Type 1 subfamily. In terms of assembly, homodimer.

The enzyme catalyses orotidine 5'-phosphate + H(+) = UMP + CO2. It participates in pyrimidine metabolism; UMP biosynthesis via de novo pathway; UMP from orotate: step 2/2. In terms of biological role, catalyzes the decarboxylation of orotidine 5'-monophosphate (OMP) to uridine 5'-monophosphate (UMP). The protein is Orotidine 5'-phosphate decarboxylase of Lawsonia intracellularis (strain PHE/MN1-00).